A 260-amino-acid chain; its full sequence is Triosephosphate isomerase (260 aa).

A substrate-binding site is contributed by 11 to 13 (NWK). The Electrophile role is filled by H103. The active-site Proton acceptor is E175. Substrate is bound by residues G181, S220, and 241-242 (GG).

Belongs to the triosephosphate isomerase family. Homodimer.

It localises to the cytoplasm. It catalyses the reaction D-glyceraldehyde 3-phosphate = dihydroxyacetone phosphate. The protein operates within carbohydrate biosynthesis; gluconeogenesis. It functions in the pathway carbohydrate degradation; glycolysis; D-glyceraldehyde 3-phosphate from glycerone phosphate: step 1/1. Functionally, involved in the gluconeogenesis. Catalyzes stereospecifically the conversion of dihydroxyacetone phosphate (DHAP) to D-glyceraldehyde-3-phosphate (G3P). In Shewanella denitrificans (strain OS217 / ATCC BAA-1090 / DSM 15013), this protein is Triosephosphate isomerase.